We begin with the raw amino-acid sequence, 204 residues long: Putative rubrerythrin (204 aa).

One can recognise a Ferritin-like diiron domain in the interval 1-159 (MINNFFVINM…KLLKEVEEGT (159 aa)). Fe(3+)-binding residues include glutamate 24, glutamate 57, glutamate 107, glutamate 110, glutamate 141, histidine 144, cysteine 171, cysteine 174, cysteine 187, and cysteine 190. Residues 166–204 (PVEWVCRKCGFVHLGKEPPEKCPSCSHPRKYFEVKCEKY) form the Rubredoxin-like domain.

Homodimer. Possesses two rubredoxin-like centers and two non-sulfur oxo-bridged di-iron centers per dimer. Fe(3+) serves as cofactor.

The protein resides in the cytoplasm. May provide oxidative stress protection via catalytic reduction of intracellular hydrogen peroxide. This is Putative rubrerythrin from Methanocaldococcus jannaschii (strain ATCC 43067 / DSM 2661 / JAL-1 / JCM 10045 / NBRC 100440) (Methanococcus jannaschii).